A 545-amino-acid polypeptide reads, in one-letter code: CTP synthase (545 aa).

An amidoligase domain region spans residues 1–266; that stretch reads MTTNYIFVTG…DDYICKRFSL (266 aa). A CTP-binding site is contributed by S14. A UTP-binding site is contributed by S14. Residues 15–20 and D72 each bind ATP; that span reads SLGKGI. Mg(2+)-binding residues include D72 and E140. Residues 147–149, 187–192, and K223 contribute to the CTP site; these read DIE and KTKPTQ. UTP contacts are provided by residues 187–192 and K223; that span reads KTKPTQ. 239-241 contributes to the ATP binding site; it reads KDV. A Glutamine amidotransferase type-1 domain is found at 291–542; it reads TIGMVGKYIE…VKAASEHQKR (252 aa). G352 lines the L-glutamine pocket. Residue C379 is the Nucleophile; for glutamine hydrolysis of the active site. Residues 380 to 383, E403, and R470 each bind L-glutamine; that span reads LGMQ. Active-site residues include H515 and E517.

It belongs to the CTP synthase family. In terms of assembly, homotetramer.

The enzyme catalyses UTP + L-glutamine + ATP + H2O = CTP + L-glutamate + ADP + phosphate + 2 H(+). It carries out the reaction L-glutamine + H2O = L-glutamate + NH4(+). It catalyses the reaction UTP + NH4(+) + ATP = CTP + ADP + phosphate + 2 H(+). It participates in pyrimidine metabolism; CTP biosynthesis via de novo pathway; CTP from UDP: step 2/2. With respect to regulation, allosterically activated by GTP, when glutamine is the substrate; GTP has no effect on the reaction when ammonia is the substrate. The allosteric effector GTP functions by stabilizing the protein conformation that binds the tetrahedral intermediate(s) formed during glutamine hydrolysis. Inhibited by the product CTP, via allosteric rather than competitive inhibition. In terms of biological role, catalyzes the ATP-dependent amination of UTP to CTP with either L-glutamine or ammonia as the source of nitrogen. Regulates intracellular CTP levels through interactions with the four ribonucleotide triphosphates. In Salmonella arizonae (strain ATCC BAA-731 / CDC346-86 / RSK2980), this protein is CTP synthase.